The following is a 555-amino-acid chain: NADH-ubiquinone oxidoreductase chain 5 (555 aa).

Helical transmembrane passes span 37 to 57 (LAMTVMIPVGIVTLCVLLYAI), 69 to 89 (FYIILSVFAIFMTILVVSDNY), 90 to 110 (IMMFIGWEFVGVISYLLISFW), 133 to 153 (FFMLALGIFLSYFHAVDFDTL), 155 to 175 (LAAPYTNTLILNILSLLLLLA), 197 to 217 (TPVSALLHAATMVCAGVYVLV), 230 to 250 (LIGICWLGGVTTLVSGLIAIV), 257 to 275 (VIALSTMSQLSIMVLAIGI), 287 to 307 (CHAFFKALLFMGAGSVIHSYI), 323 to 343 (LPFSYTAILIASLSLMAIPGL), 366 to 388 (ILYYMAVGSATLTSLYSIRVLYL), 406 to 426 (ENIRMLIPMIILVIYSIFIGF), 454 to 474 (WYIKLLPLILGLSLSLLLVYI), 494 to 516 (IYYDQLLNNVIIRKTLIFGGYLN), and 534 to 554 (RALTYINIGIFLNLLYLFFFY).

It belongs to the complex I subunit 5 family.

The protein resides in the mitochondrion inner membrane. It carries out the reaction a ubiquinone + NADH + 5 H(+)(in) = a ubiquinol + NAD(+) + 4 H(+)(out). Its function is as follows. Core subunit of the mitochondrial membrane respiratory chain NADH dehydrogenase (Complex I) that is believed to belong to the minimal assembly required for catalysis. Complex I functions in the transfer of electrons from NADH to the respiratory chain. The immediate electron acceptor for the enzyme is believed to be ubiquinone. This is NADH-ubiquinone oxidoreductase chain 5 (ND5) from Candida parapsilosis (Yeast).